Here is a 387-residue protein sequence, read N- to C-terminus: MSYFAEKLAELAQVGLNRSLPEIEHQGKWIIAQNRKMLNFSSNDYLGLASDTELQQTFLQNILQEAPLHQWFSSSSSRLLTGNFPIYARLEQLLAQRFQRETALLFNSGYHANIGILPALVDKHSLILADKLVHASLIDGTRLAGCDFYRYQHNNLAHLTQLLEKHTGQYRRIIIVTESVFSMDGDVAPLPQLVALKKAFSSQTEVMLYVDEAHAIGVYGANGLGMAEFFDCIDDIDLLVGTFGKALASMGAYLICDQLIKQYLVNTMRPLIFSTALAPINVAWTHFLFEKLPQFQPKRAHLARLSQQLKQAVELRNGDTLATQSCIVPFVVGENRQAVEKSQYLQQQGYYCLPIRPPTVPKGTARIRFSLTADLTEAELNGLIACL.

A pyridoxal 5'-phosphate-binding site is contributed by 109–110 (GY). His-134 contacts substrate. The pyridoxal 5'-phosphate site is built by Ser-182, His-214, and Thr-242. An N6-(pyridoxal phosphate)lysine modification is found at Lys-245. Residue Thr-359 coordinates substrate.

The protein belongs to the class-II pyridoxal-phosphate-dependent aminotransferase family. BioF subfamily. Homodimer. Pyridoxal 5'-phosphate is required as a cofactor.

The catalysed reaction is 6-carboxyhexanoyl-[ACP] + L-alanine + H(+) = (8S)-8-amino-7-oxononanoate + holo-[ACP] + CO2. It participates in cofactor biosynthesis; biotin biosynthesis. Catalyzes the decarboxylative condensation of pimeloyl-[acyl-carrier protein] and L-alanine to produce 8-amino-7-oxononanoate (AON), [acyl-carrier protein], and carbon dioxide. In Haemophilus ducreyi (strain 35000HP / ATCC 700724), this protein is 8-amino-7-oxononanoate synthase.